The primary structure comprises 655 residues: p-hydroxybenzoic acid efflux pump subunit AaeB (655 aa).

Transmembrane regions (helical) follow at residues 13–33 (FAVKLATAIVLALFVGFHFQL), 38–58 (WAVLTAAIVAAGPAFAAGGEP), 69–89 (LRIIGTFIGCIAGLVIIIAMI), 93–113 (LLMILVCCIWAGFCTWISSLV), 121–141 (WGLAGYTALIIVITIQPEPLL), 152–172 (EIVIGIVCAIMADLLFSPRSI), 370–390 (LFWLWTGWTSGSGVMVMIAVV), 407–427 (FIYGTLAALPLGLLYFLVIIP), 431–451 (QSMLLLCISLAVLGFFLGIEV), and 482–502 (FLDSALGQIVGCVLAFTVILL).

It belongs to the aromatic acid exporter ArAE (TC 2.A.85) family.

The protein localises to the cell inner membrane. Functionally, forms an efflux pump with AaeA. Could function as a metabolic relief valve, allowing to eliminate certain compounds when they accumulate to high levels in the cell. The sequence is that of p-hydroxybenzoic acid efflux pump subunit AaeB from Shigella dysenteriae serotype 1 (strain Sd197).